Consider the following 200-residue polypeptide: TATA-box-binding protein 2 (200 aa).

Repeat copies occupy residues 25–101 (LQNI…ARII) and 115–192 (IQNI…YPVL).

This sequence belongs to the TBP family. As to quaternary structure, belongs to the TFIID complex together with the TBP-associated factors (TAFs). Binds DNA as monomer.

Its subcellular location is the nucleus. General transcription factor that functions at the core of the DNA-binding multiprotein factor TFIID. Binding of TFIID to the TATA box is the initial transcriptional step of the pre-initiation complex (PIC), playing a role in the activation of eukaryotic genes transcribed by RNA polymerase II. The polypeptide is TATA-box-binding protein 2 (TBP2) (Zea mays (Maize)).